The following is a 1392-amino-acid chain: L-2-aminoadipate reductase (1392 aa).

Lysine 541 participates in a covalent cross-link: Glycyl lysine isopeptide (Lys-Gly) (interchain with G-Cter in ubiquitin). One can recognise a Carrier domain in the interval 843–920; it reads SQFTNVEREV…AFAAEIDRIK (78 aa). Serine 880 is modified (O-(pantetheine 4'-phosphoryl)serine). A Glycyl lysine isopeptide (Lys-Gly) (interchain with G-Cter in ubiquitin) cross-link involves residue lysine 1276.

The protein belongs to the ATP-dependent AMP-binding enzyme family. Pantetheine 4'-phosphate is required as a cofactor.

The enzyme catalyses (S)-2-amino-6-oxohexanoate + NADP(+) + H2O = L-2-aminoadipate + NADPH + 2 H(+). The catalysed reaction is (S)-2-amino-6-oxohexanoate + NAD(+) + H2O = L-2-aminoadipate + NADH + 2 H(+). It catalyses the reaction (S)-2-amino-6-oxohexanoate + AMP + diphosphate + NADP(+) = L-2-aminoadipate + ATP + NADPH + H(+). It functions in the pathway amino-acid biosynthesis; L-lysine biosynthesis via AAA pathway; L-lysine from L-alpha-aminoadipate (fungal route): step 1/3. In terms of biological role, catalyzes the activation of alpha-aminoadipate by ATP-dependent adenylation and the reduction of activated alpha-aminoadipate by NADPH. The activated alpha-aminoadipate is bound to the phosphopantheinyl group of the enzyme itself before it is reduced to (S)-2-amino-6-oxohexanoate. This chain is L-2-aminoadipate reductase (LYS2), found in Saccharomyces cerevisiae (strain ATCC 204508 / S288c) (Baker's yeast).